Consider the following 294-residue polypeptide: Cell division protein ZipA (294 aa).

Position 1 (methionine 1) is a topological domain, periplasmic. A helical transmembrane segment spans residues 2 to 22 (EIGLREWLILIGIIVIAGILF). The Cytoplasmic portion of the chain corresponds to 23–294 (DGWRRMRGGK…FERRALTQKR (272 aa)). 2 disordered regions span residues 64-111 (THKE…GDLN) and 126-146 (KDDF…STPV). Over residues 82–91 (ARERERDPKP) the composition is skewed to basic and acidic residues.

This sequence belongs to the ZipA family. As to quaternary structure, interacts with FtsZ via their C-terminal domains.

Its subcellular location is the cell inner membrane. In terms of biological role, essential cell division protein that stabilizes the FtsZ protofilaments by cross-linking them and that serves as a cytoplasmic membrane anchor for the Z ring. Also required for the recruitment to the septal ring of downstream cell division proteins. This is Cell division protein ZipA from Pseudomonas entomophila (strain L48).